A 795-amino-acid polypeptide reads, in one-letter code: Phenylalanine--tRNA ligase beta subunit (795 aa).

The region spanning 39 to 148 is the tRNA-binding domain; the sequence is AGTFNGVVVG…LDAPIGTDLR (110 aa). Residues 401–476 enclose the B5 domain; sequence PKVNTVQLRR…RIYGYNSIPN (76 aa). Positions 454, 460, 463, and 464 each coordinate Mg(2+). The region spanning 701–794 is the FDX-ACB domain; sequence SKFPANRRDL…VKQRFNAELR (94 aa).

This sequence belongs to the phenylalanyl-tRNA synthetase beta subunit family. Type 1 subfamily. In terms of assembly, tetramer of two alpha and two beta subunits. The cofactor is Mg(2+).

The protein resides in the cytoplasm. It carries out the reaction tRNA(Phe) + L-phenylalanine + ATP = L-phenylalanyl-tRNA(Phe) + AMP + diphosphate + H(+). This is Phenylalanine--tRNA ligase beta subunit from Haemophilus influenzae (strain 86-028NP).